Reading from the N-terminus, the 349-residue chain is Hydroxymethylglutaryl-CoA synthase (349 aa).

Residues aspartate 30 and alanine 31 each coordinate (3S)-3-hydroxy-3-methylglutaryl-CoA. Glutamate 82 (proton donor/acceptor) is an active-site residue. 2 residues coordinate (3S)-3-hydroxy-3-methylglutaryl-CoA: cysteine 114 and threonine 155. Catalysis depends on cysteine 114, which acts as the Acyl-thioester intermediate. Position 203 (arginine 203) interacts with CoA. The (3S)-3-hydroxy-3-methylglutaryl-CoA site is built by threonine 205 and histidine 238. Histidine 238 (proton donor/acceptor) is an active-site residue. Lysine 243 is a binding site for CoA. Residues asparagine 270 and serine 300 each coordinate (3S)-3-hydroxy-3-methylglutaryl-CoA.

It belongs to the thiolase-like superfamily. Archaeal HMG-CoA synthase family. In terms of assembly, interacts with acetoacetyl-CoA thiolase that catalyzes the precedent step in the pathway and with a DUF35 protein. The acetoacetyl-CoA thiolase/HMG-CoA synthase complex channels the intermediate via a fused CoA-binding site, which allows for efficient coupling of the endergonic thiolase reaction with the exergonic HMGCS reaction.

The enzyme catalyses acetoacetyl-CoA + acetyl-CoA + H2O = (3S)-3-hydroxy-3-methylglutaryl-CoA + CoA + H(+). The protein operates within metabolic intermediate biosynthesis; (R)-mevalonate biosynthesis; (R)-mevalonate from acetyl-CoA: step 2/3. In terms of biological role, catalyzes the condensation of acetyl-CoA with acetoacetyl-CoA to form 3-hydroxy-3-methylglutaryl-CoA (HMG-CoA). Functions in the mevalonate (MVA) pathway leading to isopentenyl diphosphate (IPP), a key precursor for the biosynthesis of isoprenoid compounds that are building blocks of archaeal membrane lipids. The sequence is that of Hydroxymethylglutaryl-CoA synthase from Methanococcus maripaludis (strain C6 / ATCC BAA-1332).